Here is a 567-residue protein sequence, read N- to C-terminus: Synaptotagmin-like protein 1 (567 aa).

The region spanning 31 to 87 (LLDLSFLTEEEQEAISDVLKRDAHLRQLEEGRVSKLRASLEDPWQLKILTGDWFQEA) is the RabBD domain. Residues 103–255 (RASIRRKKSP…VSSLNSSTLS (153 aa)) form a disordered region. Serine 120 is subject to Phosphoserine. Acidic residues-rich tracts occupy residues 122–135 (GEAEAAGEDTIEGE) and 170–184 (GQEEEPQDHECELEA). Residues 208–219 (ESQPTPAQSKAT) show a composition bias toward polar residues. Phosphoserine is present on serine 220. Positions 235–255 (SLDRMLSSSSSVSSLNSSTLS) are enriched in low complexity. C2 domains lie at 271 to 390 (VRGS…WLPL) and 403 to 532 (SRGL…VPWM).

As to quaternary structure, monomer. Binds NCF2 and NRXN1. Binds RAB27A that has been activated by GTP-binding via its N-terminus. In terms of tissue distribution, highly expressed in lung. Detected at lower levels in spleen, liver and kidney, and at very low levels in heart, brain and skeletal muscle. Expressed in cytotoxic T-lymphocytes (CTL).

The protein resides in the endomembrane system. It localises to the cell membrane. Binds phosphatidylinositol 3,4,5-trisphosphate. May play a role in vesicle trafficking. Acts as a RAB27A effector protein and may play a role in cytotoxic granule exocytosis in lymphocytes. This is Synaptotagmin-like protein 1 (Sytl1) from Mus musculus (Mouse).